A 159-amino-acid polypeptide reads, in one-letter code: Ribosomal RNA large subunit methyltransferase H (159 aa).

Residues leucine 76, glycine 108, and 127 to 132 (FSKMTF) each bind S-adenosyl-L-methionine.

Belongs to the RNA methyltransferase RlmH family. In terms of assembly, homodimer.

The protein localises to the cytoplasm. It carries out the reaction pseudouridine(1915) in 23S rRNA + S-adenosyl-L-methionine = N(3)-methylpseudouridine(1915) in 23S rRNA + S-adenosyl-L-homocysteine + H(+). In terms of biological role, specifically methylates the pseudouridine at position 1915 (m3Psi1915) in 23S rRNA. The chain is Ribosomal RNA large subunit methyltransferase H from Clostridium botulinum (strain ATCC 19397 / Type A).